The sequence spans 126 residues: Protein Wnt-7(II) (126 aa).

Residue Ser-1 is the site of O-palmitoleoyl serine; by PORCN attachment. Residues Cys-92 and Cys-107 are joined by a disulfide bond. Asn-93 carries N-linked (GlcNAc...) asparagine glycosylation.

This sequence belongs to the Wnt family. Post-translationally, palmitoleoylation is required for efficient binding to frizzled receptors. Depalmitoleoylation leads to Wnt signaling pathway inhibition.

The protein resides in the secreted. Its subcellular location is the extracellular space. The protein localises to the extracellular matrix. Its function is as follows. Ligand for members of the frizzled family of seven transmembrane receptors. Probable developmental protein. May be a signaling molecule which affects the development of discrete regions of tissues. Is likely to signal over only few cell diameters. The protein is Protein Wnt-7(II) (WNT-7(II)) of Eptatretus stoutii (Pacific hagfish).